Reading from the N-terminus, the 226-residue chain is 7-cyano-7-deazaguanine synthase (226 aa).

Position 8-18 (8-18) interacts with ATP; the sequence is LSGGLDSTTVL. Positions 190, 198, 201, and 204 each coordinate Zn(2+).

Belongs to the QueC family. Homodimer. Zn(2+) is required as a cofactor.

The catalysed reaction is 7-carboxy-7-deazaguanine + NH4(+) + ATP = 7-cyano-7-deazaguanine + ADP + phosphate + H2O + H(+). Its pathway is purine metabolism; 7-cyano-7-deazaguanine biosynthesis. Catalyzes the ATP-dependent conversion of 7-carboxy-7-deazaguanine (CDG) to 7-cyano-7-deazaguanine (preQ(0)). In Clostridium kluyveri (strain ATCC 8527 / DSM 555 / NBRC 12016 / NCIMB 10680 / K1), this protein is 7-cyano-7-deazaguanine synthase.